The chain runs to 617 residues: Serine/threonine-protein kinase par-4 (617 aa).

Over residues 1–11 (MDAPSTSSGAQ) the composition is skewed to polar residues. Residues 1–59 (MDAPSTSSGAQSKLLMPGDDEADEDHQNRGDPNLQQKQKIQLNVDPDYDDDEDDDCFID) are disordered. Over residues 46-57 (PDYDDDEDDDCF) the composition is skewed to acidic residues. In terms of domain architecture, Protein kinase spans 183 to 446 (YMWGGQIGTG…CLETMIHPWF (264 aa)). Residues 189-197 (IGTGSYGKV) and K212 contribute to the ATP site. The active-site Proton acceptor is the D310. The interval 523–617 (LEAKPGDGPD…CIFRSRTDSA (95 aa)) is disordered. Over residues 587–597 (DPPPTAAPGAP) the composition is skewed to pro residues.

Belongs to the protein kinase superfamily. CAMK Ser/Thr protein kinase family. LKB1 subfamily. Interacts with strd-1. The cofactor is Mg(2+). Requires Mn(2+) as cofactor. As to expression, expressed in the gonads, oocytes and early embryos (at protein level).

It localises to the cytoplasm. The protein localises to the cell cortex. It catalyses the reaction L-seryl-[protein] + ATP = O-phospho-L-seryl-[protein] + ADP + H(+). The catalysed reaction is L-threonyl-[protein] + ATP = O-phospho-L-threonyl-[protein] + ADP + H(+). Its function is as follows. Required for cytoplasmic partitioning and asymmetric cell division in early embryogenesis. Controls the asymmetric cell division of the Q.p neuroblast lineage. Involved in mediating cell polarization via regulation of anillin family scaffold proteins. Phosphorylates and restricts the asymmetry effectors mex-5 and mex-6 to the anterior cytoplasm of the zygote and maintains these phosphorylations until fertilization. May phosphorylate par-1. Required for strd-1 localization to the cell cortex of early embryos and may be required for strd-1 protein stabilization. May regulate the integrity of the early embryonic cortex in a strd-1-dependent manner. Phosphorylates and regulates aak-2 in response to oxidative stress and during dauer development. May also play a role in motility, behavioral response, regulation of lifespan and dauer formation through this pathway. Required to establish germline stem cell (GSC) quiescence during dauer development. Acts downstream of unc-40 in dendrite outgrowth. May play a role in cell shedding during embryogenesis, probably by phosphorylating pig-1. In Caenorhabditis elegans, this protein is Serine/threonine-protein kinase par-4 (par-4).